A 165-amino-acid chain; its full sequence is Chorismate pyruvate-lyase (165 aa).

Substrate-binding residues include Arg-77, Leu-115, and Glu-156.

This sequence belongs to the UbiC family. In terms of assembly, monomer.

It localises to the cytoplasm. It catalyses the reaction chorismate = 4-hydroxybenzoate + pyruvate. It participates in cofactor biosynthesis; ubiquinone biosynthesis. In terms of biological role, removes the pyruvyl group from chorismate, with concomitant aromatization of the ring, to provide 4-hydroxybenzoate (4HB) for the ubiquinone pathway. The chain is Chorismate pyruvate-lyase from Salmonella typhi.